The chain runs to 183 residues: dTDP-4-dehydrorhamnose 3,5-epimerase (183 aa).

Residues Arg-24, Glu-29, Gln-48–Asn-50, and Arg-60 each bind substrate. Residue His-63 is the Proton acceptor of the active site. Residues Lys-73 and His-120 each coordinate substrate. The Proton donor role is filled by Tyr-133. Substrate is bound by residues Glu-144 and Lys-169.

Belongs to the dTDP-4-dehydrorhamnose 3,5-epimerase family. Homodimer.

It carries out the reaction dTDP-4-dehydro-6-deoxy-alpha-D-glucose = dTDP-4-dehydro-beta-L-rhamnose. It functions in the pathway carbohydrate biosynthesis; dTDP-L-rhamnose biosynthesis. It participates in bacterial outer membrane biogenesis; LPS O-antigen biosynthesis. Functionally, catalyzes the epimerization of the C3' and C5'positions of dTDP-6-deoxy-D-xylo-4-hexulose, forming dTDP-6-deoxy-L-lyxo-4-hexulose. The chain is dTDP-4-dehydrorhamnose 3,5-epimerase from Salmonella typhimurium (strain LT2 / SGSC1412 / ATCC 700720).